The following is a 203-amino-acid chain: MRKKQLLRIGVGGPVGSGKTALLSQLCLALRDKYDMAVVTNDIYTHEDAQFLTRNNALAEDRIIGVETGGCPHTAIREDASMNLAAIDDLHERHPNLDFVLVESGGDNLSATFSPELSDLTLYVIDVSAGDKIPRKGGPGITKSDLLIINKIDVADLVGASLEVMDRDTKKMRGDRPFVFSNMKTQQGLAEIIDFIETEGMLK.

13–20 (GPVGSGKT) is a GTP binding site.

Belongs to the SIMIBI class G3E GTPase family. UreG subfamily. Homodimer. UreD, UreF and UreG form a complex that acts as a GTP-hydrolysis-dependent molecular chaperone, activating the urease apoprotein by helping to assemble the nickel containing metallocenter of UreC. The UreE protein probably delivers the nickel.

It localises to the cytoplasm. Facilitates the functional incorporation of the urease nickel metallocenter. This process requires GTP hydrolysis, probably effectuated by UreG. This Psychromonas ingrahamii (strain DSM 17664 / CCUG 51855 / 37) protein is Urease accessory protein UreG.